The sequence spans 180 residues: Large ribosomal subunit protein uL5 (180 aa).

It belongs to the universal ribosomal protein uL5 family. As to quaternary structure, part of the 50S ribosomal subunit; part of the 5S rRNA/L5/L18/L25 subcomplex. Contacts the 5S rRNA and the P site tRNA. Forms a bridge to the 30S subunit in the 70S ribosome.

This is one of the proteins that bind and probably mediate the attachment of the 5S RNA into the large ribosomal subunit, where it forms part of the central protuberance. In the 70S ribosome it contacts protein S13 of the 30S subunit (bridge B1b), connecting the 2 subunits; this bridge is implicated in subunit movement. Contacts the P site tRNA; the 5S rRNA and some of its associated proteins might help stabilize positioning of ribosome-bound tRNAs. This Roseiflexus sp. (strain RS-1) protein is Large ribosomal subunit protein uL5.